The primary structure comprises 276 residues: ATP synthase subunit a (276 aa).

A run of 6 helical transmembrane segments spans residues I27–G47, G61–A81, L120–L140, D159–L179, L225–L245, and G246–H266.

The protein belongs to the ATPase A chain family. F-type ATPases have 2 components, CF(1) - the catalytic core - and CF(0) - the membrane proton channel. CF(1) has five subunits: alpha(3), beta(3), gamma(1), delta(1), epsilon(1). CF(0) has four main subunits: a, b, b' and c.

Its subcellular location is the cellular thylakoid membrane. In terms of biological role, key component of the proton channel; it plays a direct role in the translocation of protons across the membrane. This Synechocystis sp. (strain ATCC 27184 / PCC 6803 / Kazusa) protein is ATP synthase subunit a.